A 202-amino-acid chain; its full sequence is Small ribosomal subunit protein uS4c (202 aa).

An S4 RNA-binding domain is found at 90–154 (MRLDNIIFRL…SQSIIIKNLN (65 aa)).

Belongs to the universal ribosomal protein uS4 family. As to quaternary structure, part of the 30S ribosomal subunit. Contacts protein S5. The interaction surface between S4 and S5 is involved in control of translational fidelity.

The protein resides in the plastid. Its subcellular location is the chloroplast. Functionally, one of the primary rRNA binding proteins, it binds directly to 16S rRNA where it nucleates assembly of the body of the 30S subunit. Its function is as follows. With S5 and S12 plays an important role in translational accuracy. The chain is Small ribosomal subunit protein uS4c (rps4) from Marchantia polymorpha (Common liverwort).